The following is a 374-amino-acid chain: 2,7-anhydro-N-acetylneuraminate hydratase (374 aa).

Residues Y13, F14, D35, N38, T70, N72, H75, E92, K93, W162, and K163 each contribute to the NAD(+) site.

The protein belongs to the Gfo/Idh/MocA family. In terms of assembly, homodimer. It depends on NAD(+) as a cofactor.

It catalyses the reaction N-acetyl-2,7-anhydro-alpha-neuraminate + H2O = N-acetyl-alpha-neuraminate. Neu5Ac is produced in the presence of NAD(+) or NADH, but not in the presence of FAD. Hydratase involved in the degradation of sialic acids, which are present in the host mucus layer and represent a much-coveted source of nutrients for R.gnavus, a prevalent member of the normal gut microbiota. Catalyzes the reversible conversion of the dehydrated form of N-acetylneuraminate (Neu5Ac), 2,7-anhydro-N-acetylneuraminate (2,7-AN), to Neu5Ac, allowing growth on 2,7-AN produced by the IT-sialidase NanH. Acts through a multistep mechanism involving a keto intermediate and cycling of NADH/NAD(+). The polypeptide is 2,7-anhydro-N-acetylneuraminate hydratase (Mediterraneibacter gnavus (strain ATCC 29149 / DSM 114966 / JCM 6515 / VPI C7-9) (Ruminococcus gnavus)).